We begin with the raw amino-acid sequence, 232 residues long: 2-C-methyl-D-erythritol 4-phosphate cytidylyltransferase (232 aa).

This sequence belongs to the IspD/TarI cytidylyltransferase family. IspD subfamily.

The catalysed reaction is 2-C-methyl-D-erythritol 4-phosphate + CTP + H(+) = 4-CDP-2-C-methyl-D-erythritol + diphosphate. The protein operates within isoprenoid biosynthesis; isopentenyl diphosphate biosynthesis via DXP pathway; isopentenyl diphosphate from 1-deoxy-D-xylulose 5-phosphate: step 2/6. Catalyzes the formation of 4-diphosphocytidyl-2-C-methyl-D-erythritol from CTP and 2-C-methyl-D-erythritol 4-phosphate (MEP). The sequence is that of 2-C-methyl-D-erythritol 4-phosphate cytidylyltransferase from Geobacter metallireducens (strain ATCC 53774 / DSM 7210 / GS-15).